Consider the following 1408-residue polypeptide: MKDLFKLLKAQAKTEEFDAIKIALASPDMIRSWSFGEVKKPETINYRTFKPERDGLFCARIFGPVKDYECLCGKYKRLKHRGVICEKCGVEVTQTKVRRERMGHIELASPTAHIWFLKSLPSRIGLLLDMPLRDIERVLYFESYVVVEGGMTYLERNQILTEEQYLDALEEFGDEFDAKMGAEAIHHLLKNMDLEQECEQLREEIVDVSSETKRKKLTKRIKLLESFVHSGNKPEWMILNVLPVLPPDLRPLVPLDGGRFATSDLNDLYRRVINRNNRLKRLLDLSAPDIIVRNEKRMLQEAVDALLDNGRRGRVITSSNKRPLKSLADMIKGKQGRFRQNLLGKRVDYSGRSVITVGPYLRLHQCGLPKKMALELFKPFIYGKLEICGLATTIKAAKKMVEREEAVVWDVLDEVIREHPVMLNRAPTLHRLGIQAFEPVLVEGKAIQLHPLVCAAYNADFDGDQMAVHIPLTLEAQLEARALMMSTNNILSPANGEPIIVPSQDVVLGLYYMTRDRVNSKGEGMILTGPKEAEKIYHAGIAELHARVKVRITEYEKIDDNELVEKKQIIDTTIGRAILWMIVPKGLPFDLVNQVLGKKSISKMLNTCYRILGLKPTVIFADQIMYTGFAYAARSGSSVGIDDMVIPAHKAEIIDDAENEVAEIQEQFQSGLVTAGERYNKVIDIWAAANERVAKAMMDNLSTEVVLNCHGKEELQVSFNNIFMMSDSGARGSAAQIRQLAGMRGLMAKPDGSIIETPITANFREGLNVLQYFISTHGARKGLADTALKTANSGYLTRRLVDVAQDLVVTEEDCGTLSGIVMTPVIEGGDVKESLRERVLGRVTTENILQPGKTDILVKRNTLLNEQWCDILEEHSVDNIKVRSVVTCDADFGVCAYCYGRDLARGHLVNKGEAIGVIAAQSIGEPGTQLTMRTFHIGGAAFRAAAESSIQVKNHGILCLVNAKFVINSANKIVITSRNAELKISDEFGRTKESYKVPYGAIMAKGDGANIISGETIANWDPHTMPVITEVNGFIRFTDMIEGQTIIRQTDELTGLSSIVILDTAERTSSGKDLRPALKIVDANQQDILIPGTDMPAQYFLPGKTIVQLEDGTKITSGDTLARLPQETSGTKDITGGLPRVADLFEARIPKEPAILAEASGIISFGKDTKGKRRLVISSLHSNDSYEEMIPKWRQLNVFEGERVERGDVISDGPESPHDILRLRGVHAVTRYIINEVQDVYRLQGVRINDKHIEVIVRQMLRKATIINAGGSDLLEGEQVEYSRIKIINRQLKSEGRQEITYVRDLLGITKASLATESFISAASFQETTRVLTEASVAGKRDDLRGLKENVIVGRLIPAGTGYAYHQERARYSKHREEALDMQQITAADEASANLAELLNSSLTNHKH.

Zn(2+)-binding residues include cysteine 70, cysteine 72, cysteine 85, and cysteine 88. Positions 460, 462, and 464 each coordinate Mg(2+). Zn(2+)-binding residues include cysteine 814, cysteine 888, cysteine 895, and cysteine 898.

Belongs to the RNA polymerase beta' chain family. In terms of assembly, the RNAP catalytic core consists of 2 alpha, 1 beta, 1 beta' and 1 omega subunit. When a sigma factor is associated with the core the holoenzyme is formed, which can initiate transcription. Requires Mg(2+) as cofactor. Zn(2+) is required as a cofactor.

It catalyses the reaction RNA(n) + a ribonucleoside 5'-triphosphate = RNA(n+1) + diphosphate. In terms of biological role, DNA-dependent RNA polymerase catalyzes the transcription of DNA into RNA using the four ribonucleoside triphosphates as substrates. The chain is DNA-directed RNA polymerase subunit beta' from Baumannia cicadellinicola subsp. Homalodisca coagulata.